A 127-amino-acid polypeptide reads, in one-letter code: Snaclec macrovipecetin subunit beta (127 aa).

3 cysteine pairs are disulfide-bonded: Cys-4–Cys-15, Cys-32–Cys-121, and Cys-98–Cys-113. Residues Tyr-11–Lys-122 form the C-type lectin domain.

As to quaternary structure, heterodimer of subunits alpha and beta; disulfide-linked. As to expression, expressed by the venom gland.

It is found in the secreted. Interferes with one step of hemostasis (modulation of platelet aggregation, or coagulation cascade, for example). This Macrovipera lebetinus (Levantine viper) protein is Snaclec macrovipecetin subunit beta.